Reading from the N-terminus, the 328-residue chain is Naphthalene 1,2-dioxygenase system ferredoxin--NAD(P)(+), reductase component (328 aa).

A 2Fe-2S ferredoxin-type domain is found at 1 to 89; it reads MELLIQPNNR…NCAIEVPEAD (89 aa). The [2Fe-2S] cluster site is built by cysteine 35, cysteine 40, cysteine 43, and cysteine 73. One can recognise an FAD-binding FR-type domain in the interval 96 to 193; it reads ARIIKGTVVA…SGPLGTAYLR (98 aa).

Belongs to the bacterial ring-hydroxylating dioxygenase ferredoxin reductase component family. In terms of assembly, the naphthalene dioxygenase (NDO) multicomponent enzyme system is composed of an electron transfer component and a dioxygenase component (iron sulfur protein (ISP)). The electron transfer component is composed of a ferredoxin reductase (NdoR) and a ferredoxin (NdoA), and the dioxygenase component is formed of a heterohexamer (trimer of heterodimers) of three large alpha subunits (NdoB) and three small beta subunits (NdoC). [2Fe-2S] cluster is required as a cofactor. Requires FAD as cofactor.

It catalyses the reaction 2 reduced [2Fe-2S]-[ferredoxin] + NAD(+) + H(+) = 2 oxidized [2Fe-2S]-[ferredoxin] + NADH. The enzyme catalyses 2 reduced [2Fe-2S]-[ferredoxin] + NADP(+) + H(+) = 2 oxidized [2Fe-2S]-[ferredoxin] + NADPH. Its pathway is aromatic compound metabolism; naphthalene degradation. Strongly inhibited by p-chloromercuribenzoate. Also inhibited by N-ethylmaleimide and o-phenanthroline. Component of the naphthalene dioxygenase (NDO) multicomponent enzyme system which catalyzes the incorporation of both atoms of molecular oxygen into naphthalene to form cis-(1R,2S)-dihydroxy-1,2-dihydronaphthalene. Ferredoxin reductase catalyzes the transfer of electrons from NADH to ferredoxin (NdoA). NADPH is also effective but yields only 39% of the activity obtained with NADH. Also able to catalyze the cis-dihydroxylation of biphenyl and phenanthrene. This chain is Naphthalene 1,2-dioxygenase system ferredoxin--NAD(P)(+), reductase component (ndoR), found in Pseudomonas putida (Arthrobacter siderocapsulatus).